Reading from the N-terminus, the 96-residue chain is Large ribosomal subunit protein uL23 (96 aa).

The protein belongs to the universal ribosomal protein uL23 family. As to quaternary structure, part of the 50S ribosomal subunit. Contacts protein L29, and trigger factor when it is bound to the ribosome.

Functionally, one of the early assembly proteins it binds 23S rRNA. One of the proteins that surrounds the polypeptide exit tunnel on the outside of the ribosome. Forms the main docking site for trigger factor binding to the ribosome. The chain is Large ribosomal subunit protein uL23 from Nitratidesulfovibrio vulgaris (strain DSM 19637 / Miyazaki F) (Desulfovibrio vulgaris).